The following is a 105-amino-acid chain: Small ribosomal subunit protein uS10 (105 aa).

Belongs to the universal ribosomal protein uS10 family. In terms of assembly, part of the 30S ribosomal subunit.

Functionally, involved in the binding of tRNA to the ribosomes. This is Small ribosomal subunit protein uS10 from Synechococcus elongatus (strain ATCC 33912 / PCC 7942 / FACHB-805) (Anacystis nidulans R2).